The chain runs to 118 residues: Large ribosomal subunit protein bL20 (118 aa).

This sequence belongs to the bacterial ribosomal protein bL20 family.

In terms of biological role, binds directly to 23S ribosomal RNA and is necessary for the in vitro assembly process of the 50S ribosomal subunit. It is not involved in the protein synthesizing functions of that subunit. This chain is Large ribosomal subunit protein bL20, found in Phenylobacterium zucineum (strain HLK1).